Consider the following 323-residue polypeptide: Sphingolipid delta(4)-desaturase/C4-monooxygenase DES2 (323 aa).

G2 is lipidated: N-myristoyl glycine. The next 2 helical transmembrane spans lie at 45–65 and 68–88; these read WTVT…QGLA and WLFF…TLAI. A Histidine box-1 motif is present at residues 89–93; the sequence is HDISH. A required for C4-hydroxylase activity region spans residues 95-99; the sequence is TAFGT. The short motif at 128-132 is the Histidine box-2 element; it reads HVDHH. A helical transmembrane segment spans residues 209–231; sequence MVYLLASSLLGLGLHPISGHFVA. Positions 259 to 263 match the Histidine box-3 motif; it reads HMEHH.

Belongs to the fatty acid desaturase type 1 family. DEGS subfamily.

It is found in the endoplasmic reticulum membrane. It catalyses the reaction a dihydroceramide + 2 Fe(II)-[cytochrome b5] + O2 + 2 H(+) = a phytoceramide + 2 Fe(III)-[cytochrome b5] + H2O. The enzyme catalyses an N-acylsphinganine + 2 Fe(II)-[cytochrome b5] + O2 + 2 H(+) = an N-acylsphing-4-enine + 2 Fe(III)-[cytochrome b5] + 2 H2O. The catalysed reaction is N-octanoylsphinganine + 2 Fe(II)-[cytochrome b5] + O2 + 2 H(+) = N-octanoyl-4-hydroxysphinganine + 2 Fe(III)-[cytochrome b5] + H2O. It carries out the reaction an N-acylsphinganine + 2 Fe(II)-[cytochrome b5] + O2 + 2 H(+) = an N-acyl-(4R)-4-hydroxysphinganine + 2 Fe(III)-[cytochrome b5] + H2O. Its pathway is membrane lipid metabolism; sphingolipid biosynthesis. Its function is as follows. Bifunctional enzyme which acts both as a sphingolipid delta(4)-desaturase and a sphingolipid C4-monooxygenase. In Bos taurus (Bovine), this protein is Sphingolipid delta(4)-desaturase/C4-monooxygenase DES2.